Here is a 343-residue protein sequence, read N- to C-terminus: Selenide, water dikinase (343 aa).

The active site involves Sec-13. Residue Sec-13 is a non-standard amino acid, selenocysteine. ATP-binding positions include Lys-16 and 44–46 (TAD). Residue Asp-47 coordinates Mg(2+). Residues Asp-64, Asp-87, and 135–137 (GHT) contribute to the ATP site. Position 87 (Asp-87) interacts with Mg(2+). Position 223 (Asp-223) interacts with Mg(2+).

The protein belongs to the selenophosphate synthase 1 family. Class I subfamily. Homodimer. The cofactor is Mg(2+).

The catalysed reaction is hydrogenselenide + ATP + H2O = selenophosphate + AMP + phosphate + 2 H(+). Functionally, synthesizes selenophosphate from selenide and ATP. The sequence is that of Selenide, water dikinase from Geobacter metallireducens (strain ATCC 53774 / DSM 7210 / GS-15).